Reading from the N-terminus, the 704-residue chain is Ribosomal RNA large subunit methyltransferase K/L (704 aa).

A THUMP domain is found at 43–154 (TMYQSLLWSR…KEKASLSLDL (112 aa)).

Belongs to the methyltransferase superfamily. RlmKL family.

Its subcellular location is the cytoplasm. It carries out the reaction guanosine(2445) in 23S rRNA + S-adenosyl-L-methionine = N(2)-methylguanosine(2445) in 23S rRNA + S-adenosyl-L-homocysteine + H(+). The enzyme catalyses guanosine(2069) in 23S rRNA + S-adenosyl-L-methionine = N(2)-methylguanosine(2069) in 23S rRNA + S-adenosyl-L-homocysteine + H(+). Functionally, specifically methylates the guanine in position 2445 (m2G2445) and the guanine in position 2069 (m7G2069) of 23S rRNA. The chain is Ribosomal RNA large subunit methyltransferase K/L from Proteus mirabilis (strain HI4320).